The chain runs to 469 residues: 3-isopropylmalate dehydratase large subunit (469 aa).

Residues C349, C410, and C413 each coordinate [4Fe-4S] cluster.

This sequence belongs to the aconitase/IPM isomerase family. LeuC type 1 subfamily. As to quaternary structure, heterodimer of LeuC and LeuD. The cofactor is [4Fe-4S] cluster.

It catalyses the reaction (2R,3S)-3-isopropylmalate = (2S)-2-isopropylmalate. It functions in the pathway amino-acid biosynthesis; L-leucine biosynthesis; L-leucine from 3-methyl-2-oxobutanoate: step 2/4. Catalyzes the isomerization between 2-isopropylmalate and 3-isopropylmalate, via the formation of 2-isopropylmaleate. The chain is 3-isopropylmalate dehydratase large subunit from Neisseria gonorrhoeae (strain ATCC 700825 / FA 1090).